Consider the following 445-residue polypeptide: 23S rRNA (uracil(1939)-C(5))-methyltransferase RlmD (445 aa).

The region spanning S12–K70 is the TRAM domain. Residues C83, C89, C92, and C171 each contribute to the [4Fe-4S] cluster site. S-adenosyl-L-methionine-binding residues include Q278, F307, N312, E328, D355, and D375. C401 acts as the Nucleophile in catalysis.

This sequence belongs to the class I-like SAM-binding methyltransferase superfamily. RNA M5U methyltransferase family. RlmD subfamily.

It catalyses the reaction uridine(1939) in 23S rRNA + S-adenosyl-L-methionine = 5-methyluridine(1939) in 23S rRNA + S-adenosyl-L-homocysteine + H(+). Its function is as follows. Catalyzes the formation of 5-methyl-uridine at position 1939 (m5U1939) in 23S rRNA. The sequence is that of 23S rRNA (uracil(1939)-C(5))-methyltransferase RlmD from Shewanella piezotolerans (strain WP3 / JCM 13877).